The primary structure comprises 386 residues: Putative membrane-bound transacylase BcsY (386 aa).

10 helical membrane-spanning segments follow: residues 37–57 (LAIALVVLFHAGWLKGGFIGV), 91–111 (LLPALLCMVALVSAGMLWWVL), 118–138 (IALNGAYALVYLSNIWASGHV), 156–176 (LSLEMQFYAIIFIMALLLPLT), 181–201 (LVLSAIFSASAAYCAYAWHTG), 237–257 (AVYAAAVAVIVGAGLFYPLSY), 258–278 (ACPSWMTVFPCGAVVLIIMLP), 290–310 (LSPLGVISYSVYLWHWPGIVV), 322–342 (AMMAGVLALVMVVSLLSYVLV), and 362–382 (AALLVAACLGLAAVLAYISHV).

Belongs to the acyltransferase 3 family.

It is found in the cell inner membrane. It functions in the pathway glycan metabolism; bacterial cellulose biosynthesis. In terms of biological role, may acylate a glucose moiety into cellulose fibrils, in cooperation with BcsABII and BcsCII. The sequence is that of Putative membrane-bound transacylase BcsY (bcsY) from Komagataeibacter xylinus (Gluconacetobacter xylinus).